Consider the following 390-residue polypeptide: Chorismate synthase (390 aa).

Residues Arg39 and Arg45 each contribute to the NADP(+) site. Residues 132-134 (RSS), 253-254 (NA), Gly298, 313-317 (KPIPT), and Arg339 contribute to the FMN site.

This sequence belongs to the chorismate synthase family. In terms of assembly, homotetramer. FMNH2 is required as a cofactor.

The enzyme catalyses 5-O-(1-carboxyvinyl)-3-phosphoshikimate = chorismate + phosphate. The protein operates within metabolic intermediate biosynthesis; chorismate biosynthesis; chorismate from D-erythrose 4-phosphate and phosphoenolpyruvate: step 7/7. In terms of biological role, catalyzes the anti-1,4-elimination of the C-3 phosphate and the C-6 proR hydrogen from 5-enolpyruvylshikimate-3-phosphate (EPSP) to yield chorismate, which is the branch point compound that serves as the starting substrate for the three terminal pathways of aromatic amino acid biosynthesis. This reaction introduces a second double bond into the aromatic ring system. The protein is Chorismate synthase of Bacillus cytotoxicus (strain DSM 22905 / CIP 110041 / 391-98 / NVH 391-98).